The chain runs to 297 residues: D-aminoacyl-tRNA deacylase (297 aa).

The protein belongs to the DtdA deacylase family. As to quaternary structure, monomer. The cofactor is Zn(2+).

The enzyme catalyses a D-aminoacyl-tRNA + H2O = a tRNA + a D-alpha-amino acid + H(+). The catalysed reaction is glycyl-tRNA(Ala) + H2O = tRNA(Ala) + glycine + H(+). D-aminoacyl-tRNA deacylase with broad substrate specificity. By recycling D-aminoacyl-tRNA to D-amino acids and free tRNA molecules, this enzyme counteracts the toxicity associated with the formation of D-aminoacyl-tRNA entities in vivo. In Methanosarcina acetivorans (strain ATCC 35395 / DSM 2834 / JCM 12185 / C2A), this protein is D-aminoacyl-tRNA deacylase.